We begin with the raw amino-acid sequence, 450 residues long: Biotin carboxylase 1 (450 aa).

Positions 1–447 (MIKKLLIANR…NTKFLETYDV (447 aa)) constitute a Biotin carboxylation domain. Residues K116, K158, 164–165 (GG), 200–203 (EKYI), and H208 contribute to the ATP site. In terms of domain architecture, ATP-grasp spans 120 to 318 (RETMKQAGVP…LIKEQIKVAS (199 aa)). Residue K237 participates in hydrogencarbonate binding. 2 residues coordinate ATP: E275 and E289. Residues E275, E289, and N291 each contribute to the Mg(2+) site. Residues E275, E289, and N291 each contribute to the Mn(2+) site. Residues R293, V296, and R339 each coordinate hydrogencarbonate. R293 is a catalytic residue. Residue R339 coordinates biotin.

As to quaternary structure, acetyl-CoA carboxylase is a heterohexamer of biotin carboxyl carrier protein, biotin carboxylase and the two subunits of carboxyl transferase in a 2:2 complex. It depends on Mg(2+) as a cofactor. Mn(2+) serves as cofactor.

It carries out the reaction N(6)-biotinyl-L-lysyl-[protein] + hydrogencarbonate + ATP = N(6)-carboxybiotinyl-L-lysyl-[protein] + ADP + phosphate + H(+). It functions in the pathway lipid metabolism; malonyl-CoA biosynthesis; malonyl-CoA from acetyl-CoA: step 1/1. In terms of biological role, this protein is a component of the acetyl coenzyme A carboxylase complex; first, biotin carboxylase catalyzes the carboxylation of the carrier protein and then the transcarboxylase transfers the carboxyl group to form malonyl-CoA. The polypeptide is Biotin carboxylase 1 (accC1) (Bacillus subtilis (strain 168)).